Here is a 727-residue protein sequence, read N- to C-terminus: MSQQDAVAALSERLLVAAYKGQTENVVQLINKGARVAVTKHGRTPLHLAANKGHLPVVQILLKAGCDLDVQDDGDQTALHRATVVGNTEIIAALIHEGCALDRQDKDGNTALHEASWHGFSQSAKLLIKAGANVLAKNKAGNTALHLACQNSHSQSTRVLLLAGSRADLKNNAGDTCLHVAARYNHLSIIRLLLTAFCSVHEKNQAGDTALHVAAALNHKKVAKILLEAGADTTIVNNAGQTPLETARYHNNPEVALLLTKAPQVLRFSRGRSLRKKRERLKEERRAQSVPRDEVAQSKGSVSAGDTPSSEQAVARKEEAREEFLSASPEPRAKDDRRRKSRPKVSAFSDPTPPADQQPGHQKNLHAHNHPKKRNRHRCSSPPPPHEFRAYQLYTLYRGKDGKVMQAPINGCRCEPLINKLENQLEATVEEIKAELGSVQDKMNTKLGQMENKTQHQMRVLDKLMVERLSAERTECLNRLQQHSDTEKHEGEKRQISLVDELKTWCMLKIQNLEQKLSGDSRACRAKSTPSTCESSTGVDQLVVTAGPAAASDSSPPVVRPKEKALNSTATQRLQQELSSSDCTGSRLRNVKVQTALLPMNEAARSDQQAGPCVNRGTQTKKSGKSGPTRHRAQQPAASSTCGQPPPATGSEQTGPHIRDTSQALELTQYFFEAVSTQMEKWYERKIEEARSQANQKAQQDKATLKEHIKSLEEELAKLRTRVQKEN.

ANK repeat units lie at residues 9–38, 41–70, 74–103, 107–136, 140–169, 173–202, 206–235, and 239–268; these read ALSE…RVAV, HGRT…DLDV, GDQT…ALDR, DGNT…NVLA, AGNT…RADL, AGDT…SVHE, AGDT…DTTI, and AGQT…VLRF. Residues 277–386 form a disordered region; sequence KRERLKEERR…HRCSSPPPPH (110 aa). Basic and acidic residues predominate over residues 280 to 296; that stretch reads RLKEERRAQSVPRDEVA. A compositionally biased stretch (polar residues) spans 298 to 312; it reads SKGSVSAGDTPSSEQ. Over residues 314–324 the composition is skewed to basic and acidic residues; the sequence is VARKEEAREEF. Over residues 363–379 the composition is skewed to basic residues; that stretch reads KNLHAHNHPKKRNRHRC. A coiled-coil region spans residues 417 to 446; the sequence is LINKLENQLEATVEEIKAELGSVQDKMNTK. Low complexity predominate over residues 548 to 557; that stretch reads PAAASDSSPP. 2 disordered regions span residues 548–586 and 601–657; these read PAAA…CTGS and NEAA…TGPH. Positions 566 to 584 are enriched in polar residues; the sequence is LNSTATQRLQQELSSSDCT. Over residues 622-633 the composition is skewed to basic residues; the sequence is KSGKSGPTRHRA. Residues 682–727 are a coiled coil; sequence WYERKIEEARSQANQKAQQDKATLKEHIKSLEEELAKLRTRVQKEN.

As to quaternary structure, interacts with AXN1, AXN2 and CSNK1E/CKI-epsilon.

Its function is as follows. Recruits CKI-epsilon to the beta-catenin degradation complex that consists of AXN1 or AXN2 and GSK3-beta and allows efficient phosphorylation of beta-catenin, thereby inhibiting beta-catenin/Tcf signals. The protein is Ankyrin repeat domain-containing protein 6 (ANKRD6) of Homo sapiens (Human).